A 711-amino-acid polypeptide reads, in one-letter code: Protein mono-ADP-ribosyltransferase PARP12 (711 aa).

C3H1-type zinc fingers lie at residues 103–128 (LCKFLIYGNCKFLKTGKNCRNGHNLK), 164–188 (ICLHYNKGDGPFGSCSFQKQCIKLH), and 189–211 (ICQYFLQGECKFGTSCKRSHEFT). Residues 247 to 279 (SALSKVSPSPAGPQGSSERKDSSGPVSPGTPSQ) are disordered. Position 268 is a phosphoserine (Ser-268). 2 C3H1-type zinc fingers span residues 280-307 (EESEQICLYHIRKSCSFQEKCHRVHFHL) and 281-306 (ESEQICLYHIRKSCSFQEKCHRVHFH). WWE domains follow at residues 308–371 (PYRW…RLST) and 374–468 (SVTK…KVCR). Cys-484 bears the ADP-ribosylcysteine mark. Residues 494–708 (IPDYWDPAAL…IFVALGNLFT (215 aa)) enclose the PARP catalytic domain. 2 positions are modified to ADP-ribosyl aspartic acid: Asp-610 and Asp-621.

The protein belongs to the ARTD/PARP family. Interacts with PARP11; this interaction plays a key role in zika virus suppression. Interacts with ISG15. Auto-mono-ADP-ribosylated. Post-translationally, phosphorylated by PRKD1.

The protein localises to the nucleus. It localises to the golgi apparatus. Its subcellular location is the trans-Golgi network. It is found in the cytoplasm. The protein resides in the stress granule. The catalysed reaction is L-aspartyl-[protein] + NAD(+) = 4-O-(ADP-D-ribosyl)-L-aspartyl-[protein] + nicotinamide. The enzyme catalyses L-cysteinyl-[protein] + NAD(+) = S-(ADP-D-ribosyl)-L-cysteinyl-[protein] + nicotinamide + H(+). Its function is as follows. Mono-ADP-ribosyltransferase that mediates mono-ADP-ribosylation of target proteins. Displays anti-alphavirus activity during IFN-gamma immune activation by directly ADP-ribosylating the alphaviral non-structural proteins nsP3 and nsP4. Acts as a component of the PRKD1-driven regulatory cascade that selectively controls a major branch of the basolateral transport pathway by catalyzing the MARylation of GOLGA1. Acts also as a key regulator of mitochondrial function, protein translation, and inflammation. Inhibits PINK1/Parkin-dependent mitophagy and promotes cartilage degeneration by inhibiting the ubiquitination and SUMOylation of MFN1/2 by upregulating ISG15 and ISGylation. The sequence is that of Protein mono-ADP-ribosyltransferase PARP12 from Mus musculus (Mouse).